The following is a 147-amino-acid chain: RxLR effector protein Avr3a (147 aa).

A signal peptide spans 1-21; that stretch reads MRLAIMLSATAVAINFATCSA. Positions 44-59 match the RxLR-dEER motif; it reads RLLRKNEENEETSEER. Lys48 is modified (N6-acetyllysine). The segment at 77-147 is effector domain; the sequence is ALTKRADAKK…YMMHLGLTGY (71 aa).

It belongs to the RxLR effector family. Forms homodimers via the RxLR-dEER motif. Interacts with host E3 ligase CMPG1. Interacts with host DRP2. Post-translationally, proteolytically cleaved. The cleavage site directly after the RxLR sequence and the high conservation among other effector proteins suggest that the RxLR motif might play a crucial role in the intracellular processing before secretion. Glycosylated. In terms of processing, N-acetylated at Lys-48 after cleavage.

Its subcellular location is the secreted. It is found in the host cytoplasm. It localises to the host endosome. Functionally, multifunctional effector that can suppress host BAK1/SERK3-mediated immunity through at least two different pathways. Manipulates plant immunity by targeting and stabilizing host E3 ligase CMPG1. Preventing the normal 26S proteasome-dependent degradation of potato CMPG1, and thus potentially of its protein substrates in the host cell, further abolishes host cell death during the biotrophic phase of infection. Also associates with the dynamin-related protein 2 (DRP2), a plant GTPase involved in immune receptor-mediated endocytosis. The Avr3A(KI) form is recognized by R3a which triggers R3a-mediated hypersensitivity and suppresses INF1-induced cell death. This Phytophthora infestans (Potato late blight agent) protein is RxLR effector protein Avr3a.